The chain runs to 296 residues: NADH-cytochrome b5 reductase 2-A (296 aa).

A helical membrane pass occupies residues 15–35; the sequence is FVIGAPTIALCSYYYSSGAFL. The FAD-binding FR-type domain occupies 47–151; it reads NNWIDLPISR…KGPIPKWKWV (105 aa). 154 to 189 provides a ligand contact to FAD; the sequence is SFESITLIGGGTGITPLYQLIHAITKNPNDKTKIRL.

The protein belongs to the flavoprotein pyridine nucleotide cytochrome reductase family. FAD serves as cofactor.

The protein localises to the mitochondrion outer membrane. It catalyses the reaction 2 Fe(III)-[cytochrome b5] + NADH = 2 Fe(II)-[cytochrome b5] + NAD(+) + H(+). In terms of biological role, may mediate the reduction of outer membrane cytochrome b5. This is NADH-cytochrome b5 reductase 2-A (MCR1A) from Vanderwaltozyma polyspora (strain ATCC 22028 / DSM 70294 / BCRC 21397 / CBS 2163 / NBRC 10782 / NRRL Y-8283 / UCD 57-17) (Kluyveromyces polysporus).